The following is a 678-amino-acid chain: Translation initiation factor eIF2B subunit epsilon (678 aa).

Position 172 is a phosphothreonine (Thr172). The tract at residues 467–489 (STNELHLSDSESSETSSSSEEDM) is disordered. Phosphoserine is present on Ser500. Thr503 carries the phosphothreonine modification. Ser506 carries the post-translational modification Phosphoserine. The 167-residue stretch at 508 to 674 (DFDEGDFNKE…NTAESESESE (167 aa)) folds into the W2 domain.

The protein belongs to the eIF-2B gamma/epsilon subunits family. As to quaternary structure, component of the translation initiation factor 2B (eIF2B) complex which is a heterodecamer of two sets of five different subunits: alpha, beta, gamma, delta and epsilon. Subunits alpha, beta and delta comprise a regulatory subcomplex and subunits epsilon and gamma comprise a catalytic subcomplex. Within the complex, the hexameric regulatory complex resides at the center, with the two heterodimeric catalytic subcomplexes bound on opposite sides.

The protein resides in the cytoplasm. It localises to the cytosol. Acts as a component of the translation initiation factor 2B (eIF2B) complex, which catalyzes the exchange of GDP for GTP on the eukaryotic initiation factor 2 (eIF2) complex gamma subunit. Its guanine nucleotide exchange factor activity is repressed when bound to eIF2 complex phosphorylated on the alpha subunit, thereby limiting the amount of methionyl-initiator methionine tRNA available to the ribosome and consequently global translation is repressed. This is Translation initiation factor eIF2B subunit epsilon (tif225) from Schizosaccharomyces pombe (strain 972 / ATCC 24843) (Fission yeast).